The following is a 515-amino-acid chain: Forkhead box protein H1 (515 aa).

The tract at residues 55–103 is disordered; the sequence is YREGGTWSPDRGSMHGLSPGTQEGSCTQAEGTKDSLGGDETLSRKSKKK. Over residues 73-84 the composition is skewed to polar residues; sequence PGTQEGSCTQAE. A DNA-binding region (fork-head) is located at residues 110-206; the sequence is KPPYSYLAMI…MKLQNTALTR (97 aa). The interval 307-399 is disordered; that stretch reads YPQSKPTRNG…EPPKKMPLLS (93 aa). Over residues 322–339 the composition is skewed to low complexity; it reads SASHSTYSSSSSSISTIS. Polar residues predominate over residues 375–388; the sequence is STPSSDTDAGNYSP. Residues 377–503 are SMAD-interaction domain (SID); that stretch reads PSSDTDAGNY…PSFLGQCLGS (127 aa). The Fast/FoxH1 motif 1 (FM1) signature appears at 402 to 406; it reads LPTSY. A Fast/FoxH1 motif 2 (FM2) motif is present at residues 412 to 418; the sequence is PNVVAPP. Positions 467–488 match the SMAD-interaction motif (SIM) motif; the sequence is LDNMLKTVPPNKSVFDVLTSHP.

As to quaternary structure, ARF1 contains 2 smad2s, 1 smad4 and 1 foxh1/fast-1 protein. Interaction with smad4 is most likely indirect through interaction with the MH2 domain of smad2. Binds to the MH2 domain of smad3, which can incorporate into the ARF1 complex. The ARF1 and ARF2 complexes are activated by distinct TGF-beta family members; formation of ARF1 is promoted by activin. Interacts (via Fork-head domain) with gtf2ird1/wbscr11 (via repeats 4-5).

Its subcellular location is the nucleus. Functionally, transcriptional activator. Recognizes and binds to the DNA sequence 5'-TGT[GT][GT]ATT-3'. Upon TGF-beta induction, forms a transcriptionally active complex with smad2 and smad4 called activin-responsive factor 1 (ARF1), which binds a site on the mix-B/mix.2 promoter called the activin response element (ARE). Binds to activated smads and the ARE with much lower affinity than fast3. Necessary for the first steps in mesoderm specification, directly inducing mesodermal genes. Acts with fast3 to control the convergent extension movements of gastrulation. Binds to the proximal element (PE) of the gsc gene and cooperates with gtf2ird1/wbscr11 and SMAD proteins to regulate gsc transcription. The protein is Forkhead box protein H1 of Xenopus tropicalis (Western clawed frog).